Reading from the N-terminus, the 1214-residue chain is SWI/SNF complex subunit SMARCC2 (1214 aa).

The interval 1-274 is marR-like, BRCT and chromo domains module; that stretch reads MAVRKKDGGP…PVSRRKKISA (274 aa). Positions 10–136 constitute a MarR-like domain; that stretch reads PNVKYYEAAD…IEKSLVQNNC (127 aa). The BRCT; N-terminus domain occupies 140–183; that stretch reads PNIFLCPEIEPKLLGKLKDIIKRHQGTVTEDKNNASHVVYPVPG. In terms of domain architecture, Chromo spans 189–217; that stretch reads EWVRPVMKRDKQVLLHWGYYPDSYDTWIP. The region spanning 233 to 257 is the BRCT; C-terminus domain; it reads KPRKVHAKWILDTDTFNEWMNEEDY. Positions 257 to 413 are disordered; sequence YEVNDDKNPV…GEQTKNPDLH (157 aa). The span at 275–284 shows a compositional bias: polar residues; the sequence is KTLTDEVNSP. 5 positions are modified to phosphoserine: Ser283, Ser286, Ser302, Ser304, and Ser306. Lys312 carries the post-translational modification N6-(ADP-ribosyl)lysine. Residue Lys326 is modified to N6-acetyllysine. Positions 331 to 344 are enriched in basic and acidic residues; it reads HREEEQEDLTKDMD. A phosphoserine mark is found at Ser347 and Ser387. Residues 379-398 are compositionally biased toward acidic residues; sequence DLDEQEDESMETTGKDEDEN. One can recognise an SWIRM domain in the interval 424–521; the sequence is IIIPSYAAWF…YQVDAESRPT (98 aa). Phosphothreonine is present on Thr548. Glycyl lysine isopeptide (Lys-Gly) (interchain with G-Cter in SUMO2) cross-links involve residues Lys564, Lys566, Lys568, and Lys592. An SANT domain is found at 596 to 647; sequence SATREWTEQETLLLLEALEMYKDDWNKVSEHVGSRTQDECILHFLRLPIEDP. Lys704 participates in a covalent cross-link: Glycyl lysine isopeptide (Lys-Gly) (interchain with G-Cter in SUMO2). A disordered region spans residues 724–852; sequence KVTGKADPAF…GERKTKVERD (129 aa). Basic and acidic residues-rich tracts occupy residues 747 to 777 and 784 to 852; these read EPER…EPRE and EEAK…VERD. Lys787 participates in a covalent cross-link: Glycyl lysine isopeptide (Lys-Gly) (interchain with G-Cter in SUMO2). Ser813 carries the phosphoserine modification. Lys848 is covalently cross-linked (Glycyl lysine isopeptide (Lys-Gly) (interchain with G-Cter in SUMO2)). Residues 907–934 adopt a coiled-coil conformation; the sequence is EELETIMDREREALEYQRQQLLADRQAF. Disordered stretches follow at residues 947–983, 997–1092, and 1182–1214; these read RQQH…PPAV, PAGS…PPPP, and LPSA…PPPQ. Low complexity predominate over residues 949–959; sequence QHFQQMHQQQQ. Residues 960–974 are compositionally biased toward pro residues; the sequence is QPPPALPPGSQPIPP. Positions 997–1033 are enriched in low complexity; it reads PAGSGAPPGSLGPSEQIGQAGSTAGPQQQQPAGAPQP. 2 stretches are compositionally biased toward pro residues: residues 1034-1051 and 1186-1202; these read GAVP…PSPF and SPLP…PTAP.

The protein belongs to the SMARCC family. Component of the multiprotein chromatin-remodeling complexes SWI/SNF: SWI/SNF-A (BAF), SWI/SNF-B (PBAF) and related complexes. The canonical complex contains a catalytic subunit (either SMARCA4/BRG1/BAF190A or SMARCA2/BRM/BAF190B) and at least SMARCE1, ACTL6A/BAF53, SMARCC1/BAF155, SMARCC2/BAF170, and SMARCB1/SNF5/BAF47. Other subunits specific to each of the complexes may also be present permitting several possible combinations developmentally and tissue specific. Component of the BAF complex, which includes at least actin (ACTB), ARID1A/BAF250A, ARID1B/BAF250B, SMARCA2/BRM, SMARCA4/BRG1, ACTL6A/BAF53, ACTL6B/BAF53B, SMARCE1/BAF57, SMARCC1/BAF155, SMARCC2/BAF170, SMARCB1/SNF5/INI1, and one or more SMARCD1/BAF60A, SMARCD2/BAF60B, or SMARCD3/BAF60C. In muscle cells, the BAF complex also contains DPF3. Component of neural progenitors-specific chromatin remodeling complex (npBAF complex) composed of at least, ARID1A/BAF250A or ARID1B/BAF250B, SMARCD1/BAF60A, SMARCD3/BAF60C, SMARCA2/BRM/BAF190B, SMARCA4/BRG1/BAF190A, SMARCB1/BAF47, SMARCC1/BAF155, SMARCE1/BAF57, SMARCC2/BAF170, PHF10/BAF45A, ACTL6A/BAF53A and actin. Component of neuron-specific chromatin remodeling complex (nBAF complex) composed of at least, ARID1A/BAF250A or ARID1B/BAF250B, SMARCD1/BAF60A, SMARCD3/BAF60C, SMARCA2/BRM/BAF190B, SMARCA4/BRG1/BAF190A, SMARCB1/BAF47, SMARCC1/BAF155, SMARCE1/BAF57, SMARCC2/BAF170, DPF1/BAF45B, DPF3/BAF45C, ACTL6B/BAF53B and actin. Component of the SWI/SNF-B (PBAF) chromatin remodeling complex, at least composed of SMARCA4/BRG1, SMARCB1/BAF47/SNF5, ACTL6A/BAF53A or ACTL6B/BAF53B, SMARCE1/BAF57, SMARCD1/BAF60A, SMARCD2/BAF60B, perhaps SMARCD3/BAF60C, SMARCC1/BAF155, SMARCC2/BAF170, PBRM1/BAF180, ARID2/BAF200 and actin. May also interact with the SIN3A histone deacetylase transcription repressor complex in conjunction with SMARCA2 and SMARCA4. Interacts with SMARD1. Interacts with KDM6B. Interaction with RCOR1. Interacts with DPF2. Interacts with ERCC6. Interacts with FOS. Post-translationally, mono-ADP-ribosylation at Lys-312 by SIRT6 promotes recruitment to the enhancer region of the Heme oxygenase-1 (HO-1) locus, leading to transcription activation of the locus. In terms of tissue distribution, ubiquitously expressed.

It localises to the nucleus. Involved in transcriptional activation and repression of select genes by chromatin remodeling (alteration of DNA-nucleosome topology). Component of SWI/SNF chromatin remodeling complexes that carry out key enzymatic activities, changing chromatin structure by altering DNA-histone contacts within a nucleosome in an ATP-dependent manner. Can stimulate the ATPase activity of the catalytic subunit of these complexes. May be required for CoREST dependent repression of neuronal specific gene promoters in non-neuronal cells. Belongs to the neural progenitors-specific chromatin remodeling complex (npBAF complex) and the neuron-specific chromatin remodeling complex (nBAF complex). During neural development a switch from a stem/progenitor to a postmitotic chromatin remodeling mechanism occurs as neurons exit the cell cycle and become committed to their adult state. The transition from proliferating neural stem/progenitor cells to postmitotic neurons requires a switch in subunit composition of the npBAF and nBAF complexes. As neural progenitors exit mitosis and differentiate into neurons, npBAF complexes which contain ACTL6A/BAF53A and PHF10/BAF45A, are exchanged for homologous alternative ACTL6B/BAF53B and DPF1/BAF45B or DPF3/BAF45C subunits in neuron-specific complexes (nBAF). The npBAF complex is essential for the self-renewal/proliferative capacity of the multipotent neural stem cells. The nBAF complex along with CREST plays a role regulating the activity of genes essential for dendrite growth. Critical regulator of myeloid differentiation, controlling granulocytopoiesis and the expression of genes involved in neutrophil granule formation. The polypeptide is SWI/SNF complex subunit SMARCC2 (SMARCC2) (Homo sapiens (Human)).